The sequence spans 313 residues: Phenylalanine-4-hydroxylase (313 aa).

H154, H159, and E200 together coordinate Fe cation.

The protein belongs to the biopterin-dependent aromatic amino acid hydroxylase family. Fe(2+) is required as a cofactor.

It carries out the reaction (6R)-L-erythro-5,6,7,8-tetrahydrobiopterin + L-phenylalanine + O2 = (4aS,6R)-4a-hydroxy-L-erythro-5,6,7,8-tetrahydrobiopterin + L-tyrosine. Its pathway is amino-acid degradation; L-phenylalanine degradation; acetoacetate and fumarate from L-phenylalanine: step 1/6. This is Phenylalanine-4-hydroxylase (phhA) from Ralstonia nicotianae (strain ATCC BAA-1114 / GMI1000) (Ralstonia solanacearum).